The sequence spans 174 residues: UPF0340 protein SAR2202 (174 aa).

This sequence belongs to the UPF0340 family.

This Staphylococcus aureus (strain MRSA252) protein is UPF0340 protein SAR2202.